Here is a 347-residue protein sequence, read N- to C-terminus: Probable dual-specificity RNA methyltransferase RlmN (347 aa).

The active-site Proton acceptor is Glu-90. Residues Tyr-96–Asp-326 enclose the Radical SAM core domain. A disulfide bridge links Cys-103 with Cys-331. Residues Cys-110, Cys-114, and Cys-117 each contribute to the [4Fe-4S] cluster site. S-adenosyl-L-methionine contacts are provided by residues Gly-157–Glu-158, Ser-189, Ser-212–His-214, and Asn-288. Cys-331 acts as the S-methylcysteine intermediate in catalysis.

This sequence belongs to the radical SAM superfamily. RlmN family. Requires [4Fe-4S] cluster as cofactor.

It is found in the cytoplasm. It catalyses the reaction adenosine(2503) in 23S rRNA + 2 reduced [2Fe-2S]-[ferredoxin] + 2 S-adenosyl-L-methionine = 2-methyladenosine(2503) in 23S rRNA + 5'-deoxyadenosine + L-methionine + 2 oxidized [2Fe-2S]-[ferredoxin] + S-adenosyl-L-homocysteine. It carries out the reaction adenosine(37) in tRNA + 2 reduced [2Fe-2S]-[ferredoxin] + 2 S-adenosyl-L-methionine = 2-methyladenosine(37) in tRNA + 5'-deoxyadenosine + L-methionine + 2 oxidized [2Fe-2S]-[ferredoxin] + S-adenosyl-L-homocysteine. Its function is as follows. Specifically methylates position 2 of adenine 2503 in 23S rRNA and position 2 of adenine 37 in tRNAs. This Clostridium botulinum (strain Eklund 17B / Type B) protein is Probable dual-specificity RNA methyltransferase RlmN.